The sequence spans 697 residues: Glycine--tRNA ligase beta subunit (697 aa).

This sequence belongs to the class-II aminoacyl-tRNA synthetase family. Tetramer of two alpha and two beta subunits.

The protein localises to the cytoplasm. The catalysed reaction is tRNA(Gly) + glycine + ATP = glycyl-tRNA(Gly) + AMP + diphosphate. This is Glycine--tRNA ligase beta subunit from Cereibacter sphaeroides (strain ATCC 17029 / ATH 2.4.9) (Rhodobacter sphaeroides).